The chain runs to 684 residues: Leishmanolysin-like peptidase (684 aa).

H257 lines the Zn(2+) pocket. E258 is a catalytic residue. Zn(2+) is bound by residues H261 and H364.

Belongs to the peptidase M8 family. Zn(2+) serves as cofactor.

It is found in the cytoplasm. Its function is as follows. Essential for the coordination of mitotic progression, and also plays a role in cell migration. This Drosophila pseudoobscura pseudoobscura (Fruit fly) protein is Leishmanolysin-like peptidase.